The sequence spans 980 residues: Valine--tRNA ligase (980 aa).

The interval 1–40 is disordered; the sequence is MADKGCEAAQSKDSSAPGSGEPRPKTEKELERERQKAAKL. The segment covering 22-40 has biased composition (basic and acidic residues); it reads PRPKTEKELERERQKAAKL. A 'HIGH' region motif is present at residues 139-149; the sequence is PNVTGALHIGH. The 'KMSKS' region motif lies at 652–656; the sequence is KMSKS. ATP is bound at residue Lys655.

This sequence belongs to the class-I aminoacyl-tRNA synthetase family.

It localises to the cytoplasm. The catalysed reaction is tRNA(Val) + L-valine + ATP = L-valyl-tRNA(Val) + AMP + diphosphate. In Schizosaccharomyces pombe (strain 972 / ATCC 24843) (Fission yeast), this protein is Valine--tRNA ligase (vas2).